The primary structure comprises 485 residues: Sphingosine kinase 1 (485 aa).

In terms of domain architecture, DAGKc spans 116-258 (GRPKKLLVFV…LDVATISQGT (143 aa)). ATP is bound by residues 126-128 (NPF) and Thr-158. Residue 183–186 (SGDG) coordinates substrate. Residue Asp-185 is the Proton donor/acceptor of the active site. Residues Glu-190 and 215–217 (GSG) each bind ATP. Asp-276 is a binding site for substrate. Residues Arg-283, Arg-289, and 446–448 (DGE) contribute to the ATP site.

Requires Mg(2+) as cofactor. As to expression, highly expressed in stems and flowers and at lower levels in roots, leaves and siliques.

Its subcellular location is the vacuole membrane. It catalyses the reaction a sphingoid base + ATP = a sphingoid 1-phosphate + ADP + H(+). Its activity is regulated as follows. Activated by phosphatidic acid (PA). Binding with PA stimulates the activity by promoting the binding of substrate to the catalytic site. Its function is as follows. Involved in the production of sphingolipid metabolites. Phosphorylates sphingosine and various sphingoid long-chain base (LCB) products, such as phytosphingosine (PHS, 4-hydroxysphinganine), 4-hydroxy-8-sphingenine, 4,8-sphingadienine, D-erythro-dihydrosphingosine and D,L-threo-dihydrosphingosine. Is required for abscisic acid (ABA) signaling that mediates stomatal closure, inhibition of seed germination and root elongation. May function upstream of PLDALPHA1 and phosphatidic acid (PA) in an amplification response to ABA that mediates stomatal closure. In Arabidopsis thaliana (Mouse-ear cress), this protein is Sphingosine kinase 1 (SPHK1).